Reading from the N-terminus, the 98-residue chain is Putative pterin-4-alpha-carbinolamine dehydratase (98 aa).

Belongs to the pterin-4-alpha-carbinolamine dehydratase family.

The catalysed reaction is (4aS,6R)-4a-hydroxy-L-erythro-5,6,7,8-tetrahydrobiopterin = (6R)-L-erythro-6,7-dihydrobiopterin + H2O. The chain is Putative pterin-4-alpha-carbinolamine dehydratase from Jannaschia sp. (strain CCS1).